The following is a 277-amino-acid chain: Carbonyl reductase [NADPH] 3 (277 aa).

Serine 2 bears the N-acetylserine mark. NADP(+) is bound by residues 10 to 34, 38 to 42, 63 to 64, and asparagine 90; these read VTGA…GDVV, RDVAR, and DI. Serine 30 carries the phosphoserine modification. Serine 140 provides a ligand contact to substrate. The active-site Proton acceptor is tyrosine 194. NADP(+) is bound by residues 194–198 and aspartate 239; that span reads YGVSK.

The protein belongs to the short-chain dehydrogenases/reductases (SDR) family. In terms of tissue distribution, detected in ovary, pancreas, intestine, colon, kidney, brain, thymus, lung, heart, liver, spleen, leukocyte, prostate and testis.

It is found in the cytoplasm. It carries out the reaction a secondary alcohol + NADP(+) = a ketone + NADPH + H(+). It catalyses the reaction a quinone + NADPH + H(+) = a quinol + NADP(+). In terms of biological role, catalyzes the NADPH-dependent reduction of carbonyl compounds to their corresponding alcohols. Has low NADPH-dependent oxidoreductase activity. Acts on several orthoquinones, acts as well on non-quinone compounds, such as isatin or on the anticancer drug oracin. Best substrates for CBR3 is 1,2- naphthoquinone, hence could play a role in protection against cytotoxicity of exogenous quinones. Exerts activity toward ortho-quinones but not paraquinones. No endogenous substrate for CBR3 except isatin has been identified. In Homo sapiens (Human), this protein is Carbonyl reductase [NADPH] 3.